The following is a 208-amino-acid chain: Putative RING finger protein 413R (208 aa).

A disordered region spans residues 1-87 (MDAIFYPLPI…RHWSDDDSDR (87 aa)). Positions 22-71 (DFQEEDFQEEDFQEEDFQEEDFQEEDEDEEDEEVNEYPSDLDDEYPDSDY) are enriched in acidic residues. Over residues 72 to 82 (YDERSDRHWSD) the composition is skewed to basic and acidic residues. The stretch at 83–147 (DDSDRDLDDL…KLTTLSKNLT (65 aa)) forms a coiled coil. Residues 148 to 196 (CIICLTNQVQILTIPCGHLIMCNPCSLNLNNSVCTRGVNSNYEKCPKCR) form an RING-type zinc finger.

The polypeptide is Putative RING finger protein 413R (EF2) (Acheta domesticus (House cricket)).